We begin with the raw amino-acid sequence, 344 residues long: Fructose-1,6-bisphosphatase class 1 (344 aa).

4 residues coordinate Mg(2+): E91, D110, L112, and D113. Residues D113–S116 and N200 each bind substrate. E272 lines the Mg(2+) pocket.

This sequence belongs to the FBPase class 1 family. In terms of assembly, homotetramer. The cofactor is Mg(2+).

It localises to the cytoplasm. It carries out the reaction beta-D-fructose 1,6-bisphosphate + H2O = beta-D-fructose 6-phosphate + phosphate. It functions in the pathway carbohydrate biosynthesis; Calvin cycle. The polypeptide is Fructose-1,6-bisphosphatase class 1 (Rhodopseudomonas palustris (strain BisA53)).